A 277-amino-acid chain; its full sequence is Energy-coupling factor transporter transmembrane protein EcfT (277 aa).

6 helical membrane-spanning segments follow: residues 39 to 59, 61 to 81, 85 to 105, 121 to 141, 163 to 183, and 254 to 274; these read ITILFIWAIFLANNPITYAII, FFCFLAIIATGLKARVFWNGV, IGLIFFTSLLQLFFMTGGHVF, AIYIFIRFTLIILISTVMTVT, VPVDEIALVISIALRFVPTLF, and SKYDLISLAYFILLVGLLLIF.

The protein belongs to the energy-coupling factor EcfT family. In terms of assembly, forms a stable energy-coupling factor (ECF) transporter complex composed of 2 membrane-embedded substrate-binding proteins (S component), 2 ATP-binding proteins (A component) and 2 transmembrane proteins (T component). May be able to interact with more than 1 S component at a time.

It is found in the cell membrane. Its function is as follows. Transmembrane (T) component of an energy-coupling factor (ECF) ABC-transporter complex. Unlike classic ABC transporters this ECF transporter provides the energy necessary to transport a number of different substrates. This is Energy-coupling factor transporter transmembrane protein EcfT from Lactobacillus helveticus (strain DPC 4571).